The chain runs to 471 residues: Ubiquitin carboxyl-terminal hydrolase calypso (471 aa).

Residues 45–276 form the UCH catalytic domain; the sequence is GWLELESDPG…IRFNLMAVVP (232 aa). The active-site Nucleophile is the C131. The Proton donor role is filled by H213. The disordered stretch occupies residues 307–326; sequence DEQGESGNGDSQRPDTPTTL. Residues 314 to 326 show a composition bias toward polar residues; that stretch reads NGDSQRPDTPTTL. The ULD domain maps to 375-403; the sequence is NYDKFICTFLSMLAHQGVLGELVSQHLLP. Residues 405–471 form a positively charged C-terminal tail required for binding nucleosomes region; the sequence is KKVSGQGAAN…KGRNKCRKRK (67 aa). The disordered stretch occupies residues 412–471; it reads AANRISKQSNTASAGGSTTGASASTPKTQQQQAAAAKNGKSPSKTPGRRRKGRNKCRKRK. Over residues 422–447 the composition is skewed to low complexity; the sequence is TASAGGSTTGASASTPKTQQQQAAAA. Positions 457-471 are enriched in basic residues; it reads PGRRRKGRNKCRKRK.

It belongs to the peptidase C12 family. BAP1 subfamily. Catalytic component of the polycomb repressive deubiquitinase (PR-DUB) complex, at least composed of caly/calypso, Asx and sba (MBD5/6 homolog). The PR-DUB complex associates with nucleosomes to mediate deubiquitination of histone H2AK118ub1 substrates; the association requires the positively charged C-terminal tail of caly, probably due to direct binding of DNA. Interacts (via ULD domain) with Asx (via DEUBAD domain); the interaction produces a stable heterodimer with a composite binding site for ubiquitin. Homodimerizes (via coiled-coil hinge-region between the UCH and ULD domains) to mediate assembly of 2 copies of the caly-Asx heterodimer into a bisymmetric tetramer; dimerization enhances PR-DUB association with nucleosomes.

The protein resides in the nucleus. It carries out the reaction Thiol-dependent hydrolysis of ester, thioester, amide, peptide and isopeptide bonds formed by the C-terminal Gly of ubiquitin (a 76-residue protein attached to proteins as an intracellular targeting signal).. In terms of biological role, catalytic component of the polycomb repressive deubiquitinase (PR-DUB) complex, a complex that specifically mediates deubiquitination of histone H2A monoubiquitinated at 'Lys-119' (H2AK118ub1). Mediates bisymmetric organization of the PR-DUB complex and is involved in association with nucleosomes to mediate deubiquitination. Does not deubiquitinate monoubiquitinated histone H2B. Required to maintain the transcriptionally repressive state of homeotic genes throughout development. The PR-DUB complex has weak or no activity toward 'Lys-48'- and 'Lys-63'-linked polyubiquitin chains. Polycomb group (PcG) protein. This chain is Ubiquitin carboxyl-terminal hydrolase calypso, found in Drosophila sechellia (Fruit fly).